The following is a 346-amino-acid chain: GTPase Obg (346 aa).

Residues 1-159 (MQFVDEANIR…RNLGLELSVL (159 aa)) form the Obg domain. The segment at 127-149 (NVHFKSSTNRTPRQCTPGEPGDE) is disordered. Residues 130–140 (FKSSTNRTPRQ) show a composition bias toward polar residues. Residues 160-333 (ADVGLLGMPN…LVKEVAYGLE (174 aa)) enclose the OBG-type G domain. GTP is bound by residues 166–173 (GMPNAGKS), 191–195 (FTTLY), 213–216 (DIPG), 283–286 (NKTD), and 314–316 (SAV). 2 residues coordinate Mg(2+): S173 and T193.

The protein belongs to the TRAFAC class OBG-HflX-like GTPase superfamily. OBG GTPase family. Monomer. Mg(2+) serves as cofactor.

Its subcellular location is the cytoplasm. An essential GTPase which binds GTP, GDP and possibly (p)ppGpp with moderate affinity, with high nucleotide exchange rates and a fairly low GTP hydrolysis rate. Plays a role in control of the cell cycle, stress response, ribosome biogenesis and in those bacteria that undergo differentiation, in morphogenesis control. The chain is GTPase Obg from Hydrogenovibrio crunogenus (strain DSM 25203 / XCL-2) (Thiomicrospira crunogena).